Consider the following 120-residue polypeptide: Large ribosomal subunit protein uL18 (120 aa).

This sequence belongs to the universal ribosomal protein uL18 family. In terms of assembly, part of the 50S ribosomal subunit; part of the 5S rRNA/L5/L18/L25 subcomplex. Contacts the 5S and 23S rRNAs.

Functionally, this is one of the proteins that bind and probably mediate the attachment of the 5S RNA into the large ribosomal subunit, where it forms part of the central protuberance. The chain is Large ribosomal subunit protein uL18 from Halalkalibacterium halodurans (strain ATCC BAA-125 / DSM 18197 / FERM 7344 / JCM 9153 / C-125) (Bacillus halodurans).